The primary structure comprises 373 residues: Histidinol-phosphate aminotransferase 2 (373 aa).

N6-(pyridoxal phosphate)lysine is present on Lys-229.

It belongs to the class-II pyridoxal-phosphate-dependent aminotransferase family. Histidinol-phosphate aminotransferase subfamily. As to quaternary structure, homodimer. The cofactor is pyridoxal 5'-phosphate.

The catalysed reaction is L-histidinol phosphate + 2-oxoglutarate = 3-(imidazol-4-yl)-2-oxopropyl phosphate + L-glutamate. It functions in the pathway amino-acid biosynthesis; L-histidine biosynthesis; L-histidine from 5-phospho-alpha-D-ribose 1-diphosphate: step 7/9. The chain is Histidinol-phosphate aminotransferase 2 from Hydrogenovibrio crunogenus (strain DSM 25203 / XCL-2) (Thiomicrospira crunogena).